The sequence spans 353 residues: 4-hydroxy-3-methylbut-2-en-1-yl diphosphate synthase (flavodoxin) (353 aa).

The [4Fe-4S] cluster site is built by Cys-268, Cys-271, Cys-303, and Glu-310.

Belongs to the IspG family. [4Fe-4S] cluster is required as a cofactor.

The enzyme catalyses (2E)-4-hydroxy-3-methylbut-2-enyl diphosphate + oxidized [flavodoxin] + H2O + 2 H(+) = 2-C-methyl-D-erythritol 2,4-cyclic diphosphate + reduced [flavodoxin]. It functions in the pathway isoprenoid biosynthesis; isopentenyl diphosphate biosynthesis via DXP pathway; isopentenyl diphosphate from 1-deoxy-D-xylulose 5-phosphate: step 5/6. Converts 2C-methyl-D-erythritol 2,4-cyclodiphosphate (ME-2,4cPP) into 1-hydroxy-2-methyl-2-(E)-butenyl 4-diphosphate. This is 4-hydroxy-3-methylbut-2-en-1-yl diphosphate synthase (flavodoxin) from Ruminiclostridium cellulolyticum (strain ATCC 35319 / DSM 5812 / JCM 6584 / H10) (Clostridium cellulolyticum).